A 113-amino-acid chain; its full sequence is Dynein light chain Tctex-type 1 (113 aa).

M1 bears the N-acetylmethionine mark. The tract at residues 41–113 is interaction with GNB1; sequence QWTTNVVEQT…CIVSAFGLSI (73 aa).

This sequence belongs to the dynein light chain Tctex-type family. As to quaternary structure, homodimer. The cytoplasmic dynein 1 complex consists of two catalytic heavy chains (HCs) and a number of non-catalytic subunits presented by intermediate chains (ICs), light intermediate chains (LICs) and light chains (LCs); the composition seems to vary in respect to the IC, LIC and LC composition. The heavy chain homodimer serves as a scaffold for the probable homodimeric assembly of the respective non-catalytic subunits. The ICs and LICs bind directly to the HC dimer and dynein LCs assemble on the IC dimer. DYNLT1 and DYNLT3 compete for association with dynein IC (DYNC1I1 or DYNC1I2). Self-associates. Interacts with RHO. Interacts with DYNC1I1 and DYNC1I2. Interacts with DOC2A, DOC2B and SCN10A. Interacts with PVR. Interacts with SVIL isoform 2. Interacts with GNB1; the interaction occurs in presence of guanine nucleotide-binding protein G(T) subunit gamma; the interaction diminishes the association of DYNLT1 with dynein IC (DYNC1I1 or DYNC1I2). Interacts with GNB2, GNB3 and GNB5; the interactions occur in presence of guanine nucleotide-binding protein G(T) subunit gamma. Interacts with ACVR2B and ARHGEF2. Interacts with DNAI4. Interacts with CFAP61. Phosphorylated by BMPR2. The phosphorylation status is proposed to regulate the association with the cytoplasmic dynein complex and may have role in cytoplasmic dynein cargo release.

The protein localises to the golgi apparatus. It is found in the cytoplasm. It localises to the cytoskeleton. Its subcellular location is the spindle. Functionally, acts as one of several non-catalytic accessory components of the cytoplasmic dynein 1 complex that are thought to be involved in linking dynein to cargos and to adapter proteins that regulate dynein function. Cytoplasmic dynein 1 acts as a motor for the intracellular retrograde motility of vesicles and organelles along microtubules. Binds to transport cargos and is involved in apical cargo transport such as rhodopsin-bearing vesicles in polarized epithelia. Is involved in intracellular targeting of D-type retrovirus gag polyproteins to the cytoplasmic assembly site. May also be a accessory component of axonemal dynein. Its function is as follows. Plays a role in neuronal morphogenesis; the function is independent of cytoplasmic dynein and seems to be coupled to regulation of the actin cytoskeleton by enhancing Rac1 activity. Required for neurite outgrowth. The function in neurogenesis may be regulated by association with a G-protein beta-gamma dimer. May function as a receptor-independent activator of heterotrimeric G-protein signaling; the activation appears to be independent of a nucleotide exchange. Plays a role in regulating neurogenesis; inhibits the genesis of neurons from precursor cells during cortical development presumably by antagonizing ARHGEF2. Unrelated to the role in retrograde microtubule-associated movement may play a role in the dimerization of cytoplasmic proteins/domains such as for ACVR2B. Binds to the cytoplasmic domain of ACVR2B and, in vitro, inhibits ACVR2B signaling. Involved in the regulation of mitotic spindle orientation. The chain is Dynein light chain Tctex-type 1 (Dynlt1) from Rattus norvegicus (Rat).